Reading from the N-terminus, the 563-residue chain is MSETINTAAQFPSFEKPTVQFNEKGWGPCELPDTFKDVPYQPFSKNDRLGKICDWTSTSNNDKKYQNKYASTFGTGNQYAYYHEEDETTFHLVDTARVQKPPHQRGRFRNMRNSRSGRGRNARGGLNTHGHGMTTLNSKNVKARDPRRGVGKRFGNRGPPPKMRESSVAVRADWASIEEMDFPRLMKLSLPNIKEGEDITTCGTLEYYDKTYDRINVKNEKPLQKIDRIVHTVTTTDDPVIRRLSKTIGNVFATDAILATIMCSTRSNYSWDIVIEKVGEKIFMDKRDHTEFDLLTVNETSVEPPTDDDSSCNSPRNLAIEATFINHNFSQQVLKTGDQEAKYKFEEPNPFISEDEDIQVASVGYRYKKWELGSDIVLVARCEHDGVLQTPSGEPQFLSIKALNEWDSKLANGVEWRQKLDTQRGAVLANELRNNACKLAKWTVQAVLAGSDQLKLGYVSRINPRDHSRHVILGTQQFKPHEFATQINLSMDNAWGILRCIIDLVMKQKDGKYLIMKDPNKPIIRLYDIPDNTFDSDDSDDGEGDDGEGFQQVYNYANNSNKI.

The disordered stretch occupies residues 98-167 (VQKPPHQRGR…GPPPKMRESS (70 aa)). The span at 100 to 121 (KPPHQRGRFRNMRNSRSGRGRN) shows a compositional bias: basic residues. T128 carries the phosphothreonine modification. Residues 291–305 (EFDLLTVNETSVEPP) form an RNA gate region.

It belongs to the eIF-3 subunit D family. As to quaternary structure, component of the eukaryotic translation initiation factor 3 (eIF-3) complex. The eIF-3 complex interacts with pix.

The protein resides in the cytoplasm. MRNA cap-binding component of the eukaryotic translation initiation factor 3 (eIF-3) complex, which is involved in protein synthesis of a specialized repertoire of mRNAs and, together with other initiation factors, stimulates binding of mRNA and methionyl-tRNAi to the 40S ribosome. The eIF-3 complex specifically targets and initiates translation of a subset of mRNAs involved in cell proliferation. In the eIF-3 complex, eif3d specifically recognizes and binds the 7-methylguanosine cap of a subset of mRNAs. This chain is Eukaryotic translation initiation factor 3 subunit D-1, found in Drosophila mojavensis (Fruit fly).